Consider the following 117-residue polypeptide: Large ribosomal subunit protein eL8 (117 aa).

This sequence belongs to the eukaryotic ribosomal protein eL8 family. As to quaternary structure, part of the 50S ribosomal subunit. Part of the RNase P complex.

It localises to the cytoplasm. The catalysed reaction is Endonucleolytic cleavage of RNA, removing 5'-extranucleotides from tRNA precursor.. In terms of biological role, multifunctional RNA-binding protein that recognizes the K-turn motif in ribosomal RNA, the RNA component of RNase P, box H/ACA, box C/D and box C'/D' sRNAs. Part of ribonuclease P, a protein complex that generates mature tRNA molecules by cleaving their 5'-ends, this subunit dramatically stimulates RNase P activity. This is Large ribosomal subunit protein eL8 from Methanococcus maripaludis (strain DSM 14266 / JCM 13030 / NBRC 101832 / S2 / LL).